Here is a 120-residue protein sequence, read N- to C-terminus: Dihydroneopterin triphosphate 2'-epimerase (120 aa).

Belongs to the DHNA family. Homooctamer.

The catalysed reaction is 7,8-dihydroneopterin 3'-triphosphate = 7,8-dihydromonapterin 3'-triphosphate. In terms of biological role, catalyzes the epimerization of carbon 2' of the side chain of 7,8-dihydroneopterin triphosphate (H2NTP) to form 7,8-dihydromonapterin triphosphate (H2MTP). Is required for tetrahydromonapterin biosynthesis. This chain is Dihydroneopterin triphosphate 2'-epimerase (folX), found in Escherichia coli O157:H7.